We begin with the raw amino-acid sequence, 361 residues long: Palmitoyltransferase ZDHHC16 (361 aa).

The Cytoplasmic portion of the chain corresponds to 1–77 (MRGQRSLLLG…VYWLVDNVIR (77 aa)). The helical transmembrane segment at 78 to 98 (WFGVVFVVLVIVLTGSIVAIA) threads the bilayer. At 99-116 (YLCVLPLILRTYSVPRLC) the chain is on the lumenal side. The chain crosses the membrane as a helical span at residues 117–137 (WHFFYSHWNLILIVFHYYQAI). The Cytoplasmic segment spans residues 138-198 (TTPPGYPPQG…NNCVGHYNHR (61 aa)). In terms of domain architecture, DHHC spans 155 to 205 (SICKKCIYPKPARTHHCSICNRCVLKMDHHCPWLNNCVGHYNHRYFFSFCF). The active-site S-palmitoyl cysteine intermediate is the C185. A helical membrane pass occupies residues 199–219 (YFFSFCFFMTLGCVYCSYGSW). Residues 220 to 250 (DLFREAYAAIETYHQTPPPTFSFRERITHKS) lie on the Lumenal side of the membrane. The chain crosses the membrane as a helical span at residues 251–271 (LVYLWFLCSSVALALGALTMW). Residues 272–361 (HAVLISRGET…TAHSASVMAV (90 aa)) lie on the Cytoplasmic side of the membrane.

It belongs to the DHHC palmitoyltransferase family. In terms of assembly, interacts with ABL1. Interacts with COPS5. As to expression, ubiquitously expressed.

The protein resides in the endoplasmic reticulum membrane. It catalyses the reaction L-cysteinyl-[protein] + hexadecanoyl-CoA = S-hexadecanoyl-L-cysteinyl-[protein] + CoA. Palmitoyl acyltransferase that mediates palmitoylation of proteins such as PLN and ZDHHC6. Required during embryonic heart development and cardiac function, possibly by mediating palmitoylation of PLN, thereby affecting PLN phosphorylation and homooligomerization. Also required for eye development. Palmitoylates ZDHHC6, affecting the quaternary assembly of ZDHHC6, its localization, stability and function. May play a role in DNA damage response. May be involved in apoptosis regulation. Involved in the proliferation of neural stem cells by regulating the FGF/ERK pathway. The chain is Palmitoyltransferase ZDHHC16 from Mus musculus (Mouse).